Here is a 230-residue protein sequence, read N- to C-terminus: Endonuclease NucS (230 aa).

This sequence belongs to the NucS endonuclease family.

The protein resides in the cytoplasm. Cleaves both 3' and 5' ssDNA extremities of branched DNA structures. This is Endonuclease NucS from Corynebacterium glutamicum (strain ATCC 13032 / DSM 20300 / JCM 1318 / BCRC 11384 / CCUG 27702 / LMG 3730 / NBRC 12168 / NCIMB 10025 / NRRL B-2784 / 534).